The sequence spans 581 residues: Frizzled-8 (581 aa).

The N-terminal stretch at 1–23 (MESLSLSLLLLVSWLQGSQCAAA) is a signal peptide. Positions 24–144 (KELSCQEITV…GNPDTLCMDY (121 aa)) constitute an FZ domain. Residues 24–239 (KELSCQEITV…PEERTFTEFW (216 aa)) lie on the Extracellular side of the membrane. 5 disulfide bridges follow: Cys28–Cys89, Cys36–Cys82, Cys73–Cys111, Cys100–Cys141, and Cys104–Cys128. Asn42 is a glycosylation site (N-linked (GlcNAc...) asparagine). 64 to 71 (QFWPLVVI) is a hexadecanoate binding site. Positions 88–93 (ICLEDY) are wnt-binding. A wnt-binding region spans residues 140-146 (LCMDYYN). Residue Asn146 is glycosylated (N-linked (GlcNAc...) asparagine). Residues 151–189 (TTAAPSHPEPPKPPARSVPKGRTRVEPPRSRSRATGCES) form a disordered region. Residues 157–166 (HPEPPKPPAR) are compositionally biased toward pro residues. Residues 240-260 (IGLWSVLCFASTFATVSTFLI) form a helical membrane-spanning segment. Over 261 to 271 (DMERFKYPERP) the chain is Cytoplasmic. A helical membrane pass occupies residues 272–292 (IIFLSACYLLVSTGYLIRLIA). Over 293–320 (GHEKVACSRGELDLEHIIHYETTGPALC) the chain is Extracellular. Residues 321-341 (TLVFLLIYFFGMASSIWWVIL) traverse the membrane as a helical segment. Topologically, residues 342 to 377 (SLTWFLAAGMKWGNEAIAGYSQYFHLAAWLVPSIKS) are cytoplasmic. A helical membrane pass occupies residues 378-398 (IAVLALSSVDGDPVAGICFVG). The Extracellular segment spans residues 399–407 (NQNLDNLRG). The helical transmembrane segment at 408 to 428 (FVLAPLVIYLFIGSMFLLAGF) threads the bilayer. At 429–454 (VSLFRIRSVIKQGGTKTDKLEKLMIR) the chain is on the cytoplasmic side. Residues 455–475 (IGIFSVLYTVPATIVVACFFY) traverse the membrane as a helical segment. Residues 476–505 (EQHNRQGWEVAHNCNSCQPEMAQPHRPDYA) are Extracellular-facing. A helical membrane pass occupies residues 506–526 (VFMLKYFMCLVVGITSGVWIW). Residues 527–581 (SGKTLESWRAFCTRCCWGSKATGGSMYSDVSTGLTWRSGTGSSVSCPKQMPLSQV) are Cytoplasmic-facing. The short motif at 529-534 (KTLESW) is the Lys-Thr-X-X-X-Trp motif, mediates interaction with the PDZ domain of Dvl family members element. The short motif at 579-581 (SQV) is the PDZ-binding element.

Belongs to the G-protein coupled receptor Fz/Smo family. Interacts with lypd6 and the interaction is strongly enhanced by wnt3a.

It is found in the membrane. The protein resides in the cell membrane. In terms of biological role, receptor for Wnt proteins. Most of frizzled receptors are coupled to the beta-catenin canonical signaling pathway, which leads to the activation of disheveled proteins, inhibition of GSK-3 kinase, nuclear accumulation of beta-catenin and activation of Wnt target genes. A second signaling pathway involving PKC and calcium fluxes has been seen for some family members, but it is not yet clear if it represents a distinct pathway or if it can be integrated in the canonical pathway, as PKC seems to be required for Wnt-mediated inactivation of GSK-3 kinase. Both pathways seem to involve interactions with G-proteins. May be involved in transduction and intercellular transmission of polarity information during tissue morphogenesis and/or in differentiated tissues. Activation by Wnt8, Wnt5A or Wnt3A induces expression of beta-catenin target genes. Displays an axis-inducing activity. In Xenopus laevis (African clawed frog), this protein is Frizzled-8 (fzd8).